A 656-amino-acid chain; its full sequence is Sulfate transporter 1.3 (656 aa).

Residues 1–30 form a disordered region; the sequence is MSARAHPVDDDGEISPVERSSPRQANTPYV. The Cytoplasmic portion of the chain corresponds to 1-94; sequence MSARAHPVDD…GRKYNLKLFR (94 aa). Residues 95–115 form a helical membrane-spanning segment; sequence GDLIAGLTIASLCIPQDIGYA. At 116–119 the chain is on the extracellular side; that stretch reads KLAS. The chain crosses the membrane as a helical span at residues 120–140; it reads LDPKYGLYSSFVPPLVYACMG. Residues 141-144 are Cytoplasmic-facing; the sequence is SSKD. A helical membrane pass occupies residues 145–165; that stretch reads IAIGPVAVVSLLLGTLLRAEI. Topologically, residues 166–176 are extracellular; that stretch reads DPNTNPNEYLR. The next 2 membrane-spanning stretches (helical) occupy residues 177–197 and 198–218; these read LAFTSTFFAGVTQAALGFFRL and GFLIDFLSHAAVVGFMGGAAI. The Extracellular portion of the chain corresponds to 219–256; that stretch reads TIALQQLKGFLGINKFTKKTDIIAVLSSVISSAHHGWN. Residues 257-277 traverse the membrane as a helical segment; it reads WQTILISASFLIFLLISKFIG. Residues 278-283 lie on the Cytoplasmic side of the membrane; the sequence is KRNKKL. A helical transmembrane segment spans residues 284-304; the sequence is FWIPAIAPLVSVIISTFFVYI. Residues 305 to 342 are Extracellular-facing; it reads TRADKKGVQIVKHLDKGLNPSSLRLIYFSGDYLLKGFR. The helical transmembrane segment at 343–363 threads the bilayer; sequence IGVVSGMVALTEAVAIGRTFA. Residues 364–375 lie on the Cytoplasmic side of the membrane; that stretch reads AMKDYQIDGNKE. A helical transmembrane segment spans residues 376–396; it reads MVALGAMNVIGSMTSCYVSTG. The Extracellular segment spans residues 397-412; that stretch reads SFSRSAVNFMAGCQTA. A helical membrane pass occupies residues 413–433; it reads VSNIIMSIVVLLTLLFLTPLF. Over 434-441 the chain is Cytoplasmic; that stretch reads KYTPNAIL. Residues 442-462 traverse the membrane as a helical segment; the sequence is AAIIINAVIPLVDVNATILIF. The Extracellular segment spans residues 463–473; that stretch reads KIDKLDFVACM. The helical transmembrane segment at 474 to 494 threads the bilayer; that stretch reads GAFFGVIFVSVEIGLLIAVGI. The Cytoplasmic portion of the chain corresponds to 495 to 656; that stretch reads SFAKILLQVT…SCSPKLSDEV (162 aa). The 124-residue stretch at 525-648 folds into the STAS domain; the sequence is QYPEATRIPG…LTVAEAVDSC (124 aa).

The protein belongs to the SLC26A/SulP transporter (TC 2.A.53) family. In terms of tissue distribution, expressed in the phloem of cotyledons, hypocotyls and roots.

It is found in the membrane. In terms of biological role, high-affinity H(+)/sulfate cotransporter that mediates the loading of sulfate into the sieve tube. Plays a central role in the regulation of sulfate assimilation. The sequence is that of Sulfate transporter 1.3 (SULTR1;3) from Arabidopsis thaliana (Mouse-ear cress).